The following is a 166-amino-acid chain: UPF0561 protein C2orf68 (166 aa).

A disordered region spans residues 32–107 (NQIARDDYDK…SELEPSGHQL (76 aa)). 2 stretches are compositionally biased toward basic and acidic residues: residues 34-49 (IARD…AAKE) and 73-85 (RHRD…RNPD). Over residues 91 to 104 (ESSSSGGSELEPSG) the composition is skewed to low complexity.

Belongs to the UPF0561 family.

The polypeptide is UPF0561 protein C2orf68 (C2orf68) (Homo sapiens (Human)).